Consider the following 234-residue polypeptide: Transmembrane protein 65 (234 aa).

The N-terminal 55 residues, 1–55, are a transit peptide targeting the mitochondrion; sequence MSRLLPLLGSRTARSLRPGPAAAPRLPSWCCCGRGLLALGVPGGPRLLGTHPKKE. Topologically, residues 56-110 are cytoplasmic; sequence PMEALNTAQGARDFIYSLHSTERSCLLKELHRFESIAIAQEKLEALPPTPGQLRY. The helical transmembrane segment at 111 to 131 threads the bilayer; the sequence is VFFHNAIPFVGFGFLDNAIMI. Topologically, residues 132-138 are extracellular; sequence VAGTQIE. A helical transmembrane segment spans residues 139 to 159; the sequence is LSIGIILGISTMAAAALGNLV. Over 160 to 203 the chain is Cytoplasmic; it reads SDLAGLGLAGYVEALASRLGLSIPDLTPKQVDMWQTRVSTHLGK. Residues 204–224 form a helical membrane-spanning segment; it reads AVGVTIGCILGMFPLIFFGGS. Residues 225-234 are Extracellular-facing; sequence EEDEKLETTN.

Monomer. Homodimer. Interacts with GJA1. Interacts weakly with DSP. Interacts with SCN1B. As to expression, predominantly expressed in the ventricular tissue (at protein level).

It localises to the cell membrane. The protein localises to the mitochondrion inner membrane. Essential for maintaining proper cardiac intercalated disk (ICD) structure and function as well as cardiac conduction velocity in the heart. Its association with SCN1B is required for stabilizing the perinexus in the ICD and for localization of GJA1 and SCN5A to the ICD. May regulate the function of the gap junction protein GJA1 and may contribute to the stability and proper localization of GJA1 to cardiac intercalated disk thereby regulating gap junction communication. Regulates mitochondrial respiration and mitochondrial DNA copy number maintenance. The chain is Transmembrane protein 65 (Tmem65) from Mus musculus (Mouse).